The primary structure comprises 348 residues: MAAPRLPQLPPHDGPMLSVVDMHTGGEPLRIVLSGAPAPEGRTILEKRRWVRENADWLRKVLMFEPRGHRDMYGALLVPGDEEEANIGVLFMHNEGYSTMCGHAIVALGRFAVDYGLVNAAQGPETAVNIQCPCGLIRAYVSYTGGRSGSVRFRSVPAFAFATDVTVDVPGYGKVVVDIAYGGAFYAFVSAETFGLDVCSSRTRDLVDVSAAVTESVKAQVKLNHPDSDDLAFLYGTILTDGKDSYSEEPTANICIFAESQVDRSPTGSGVTARIALQYHKGLIQLEQIRTFKSGATGSLFTGKAVKETLCGNFKAVVVEVSGQAYYTGASSFVIENKDSLKDGFLLK.

Cys101 (proton acceptor) is an active-site residue. Substrate is bound by residues 102 to 103 (GH), Asp263, and 268 to 269 (GS).

The protein belongs to the proline racemase family. Homodimer.

It catalyses the reaction trans-3-hydroxy-L-proline = 1-pyrroline-2-carboxylate + H2O. Its function is as follows. Catalyzes the dehydration of trans-3-hydroxy-L-proline to delta-1-pyrroline-2-carboxylate (Pyr2C). This chain is Trans-L-3-hydroxyproline dehydratase (l3hypdh), found in Xenopus tropicalis (Western clawed frog).